A 131-amino-acid polypeptide reads, in one-letter code: Large ribosomal subunit protein bL17 (131 aa).

This sequence belongs to the bacterial ribosomal protein bL17 family. In terms of assembly, part of the 50S ribosomal subunit. Contacts protein L32.

This Thermotoga neapolitana (strain ATCC 49049 / DSM 4359 / NBRC 107923 / NS-E) protein is Large ribosomal subunit protein bL17.